A 320-amino-acid chain; its full sequence is Methionyl-tRNA formyltransferase (320 aa).

114–117 provides a ligand contact to (6S)-5,6,7,8-tetrahydrofolate; sequence SLLP.

Belongs to the Fmt family.

It carries out the reaction L-methionyl-tRNA(fMet) + (6R)-10-formyltetrahydrofolate = N-formyl-L-methionyl-tRNA(fMet) + (6S)-5,6,7,8-tetrahydrofolate + H(+). Its function is as follows. Attaches a formyl group to the free amino group of methionyl-tRNA(fMet). The formyl group appears to play a dual role in the initiator identity of N-formylmethionyl-tRNA by promoting its recognition by IF2 and preventing the misappropriation of this tRNA by the elongation apparatus. The sequence is that of Methionyl-tRNA formyltransferase from Acinetobacter baumannii (strain ACICU).